Here is a 273-residue protein sequence, read N- to C-terminus: Mitochondrial distribution and morphology protein 12 (273 aa).

An SMP-LTD domain is found at 1 to 260 (MSFDINWEQL…WPSWINFDFY (260 aa)). Residues 76–98 (MSAEEETEGSDDEGYGGDRVRNR) are disordered. Over residues 78-90 (AEEETEGSDDEGY) the composition is skewed to acidic residues.

The protein belongs to the MDM12 family. In terms of assembly, component of the ER-mitochondria encounter structure (ERMES) or MDM complex, composed of MMM1, MDM10, MDM12 and MDM34. An MMM1 homodimer associates with one molecule of MDM12 on each side in a pairwise head-to-tail manner, and the SMP-LTD domains of MMM1 and MDM12 generate a continuous hydrophobic tunnel for phospholipid trafficking.

The protein resides in the mitochondrion outer membrane. The protein localises to the endoplasmic reticulum membrane. Its function is as follows. Component of the ERMES/MDM complex, which serves as a molecular tether to connect the endoplasmic reticulum (ER) and mitochondria. Components of this complex are involved in the control of mitochondrial shape and protein biogenesis, and function in nonvesicular lipid trafficking between the ER and mitochondria. MDM12 is required for the interaction of the ER-resident membrane protein MMM1 and the outer mitochondrial membrane-resident beta-barrel protein MDM10. The MDM12-MMM1 subcomplex functions in the major beta-barrel assembly pathway that is responsible for biogenesis of all mitochondrial outer membrane beta-barrel proteins, and acts in a late step after the SAM complex. The MDM10-MDM12-MMM1 subcomplex further acts in the TOM40-specific pathway after the action of the MDM12-MMM1 complex. Essential for establishing and maintaining the structure of mitochondria and maintenance of mtDNA nucleoids. In Vanderwaltozyma polyspora (strain ATCC 22028 / DSM 70294 / BCRC 21397 / CBS 2163 / NBRC 10782 / NRRL Y-8283 / UCD 57-17) (Kluyveromyces polysporus), this protein is Mitochondrial distribution and morphology protein 12.